Here is a 229-residue protein sequence, read N- to C-terminus: 1-(5-phosphoribosyl)-5-[(5-phosphoribosylamino)methylideneamino] imidazole-4-carboxamide isomerase (229 aa).

Asp8 (proton acceptor) is an active-site residue. Residue Asp125 is the Proton donor of the active site.

It belongs to the HisA/HisF family.

The protein localises to the cytoplasm. The catalysed reaction is 1-(5-phospho-beta-D-ribosyl)-5-[(5-phospho-beta-D-ribosylamino)methylideneamino]imidazole-4-carboxamide = 5-[(5-phospho-1-deoxy-D-ribulos-1-ylimino)methylamino]-1-(5-phospho-beta-D-ribosyl)imidazole-4-carboxamide. The protein operates within amino-acid biosynthesis; L-histidine biosynthesis; L-histidine from 5-phospho-alpha-D-ribose 1-diphosphate: step 4/9. The chain is 1-(5-phosphoribosyl)-5-[(5-phosphoribosylamino)methylideneamino] imidazole-4-carboxamide isomerase from Thermococcus onnurineus (strain NA1).